Reading from the N-terminus, the 231-residue chain is Ureidoacrylate amidohydrolase RutB (231 aa).

D25 serves as the catalytic Proton acceptor. K134 is an active-site residue. C167 serves as the catalytic Nucleophile.

It belongs to the isochorismatase family. RutB subfamily.

It carries out the reaction (Z)-3-ureidoacrylate + H2O + H(+) = (Z)-3-aminoacrylate + NH4(+) + CO2. The enzyme catalyses (Z)-3-ureidoacrylate + H2O = (Z)-3-aminoacrylate + carbamate + H(+). The catalysed reaction is (Z)-2-methylureidoacrylate + H2O + H(+) = (Z)-2-methylaminoacrylate + NH4(+) + CO2. Hydrolyzes ureidoacrylate to form aminoacrylate and carbamate. The carbamate hydrolyzes spontaneously, thereby releasing one of the nitrogen atoms of the pyrimidine ring as ammonia and one of its carbon atoms as CO2. The chain is Ureidoacrylate amidohydrolase RutB from Escherichia coli (strain SMS-3-5 / SECEC).